A 112-amino-acid chain; its full sequence is Ribosome-binding factor A (112 aa).

Belongs to the RbfA family. As to quaternary structure, monomer. Binds 30S ribosomal subunits, but not 50S ribosomal subunits or 70S ribosomes.

The protein localises to the cytoplasm. Its function is as follows. One of several proteins that assist in the late maturation steps of the functional core of the 30S ribosomal subunit. Associates with free 30S ribosomal subunits (but not with 30S subunits that are part of 70S ribosomes or polysomes). Required for efficient processing of 16S rRNA. May interact with the 5'-terminal helix region of 16S rRNA. In Mycoplasmopsis pulmonis (strain UAB CTIP) (Mycoplasma pulmonis), this protein is Ribosome-binding factor A.